Reading from the N-terminus, the 624-residue chain is tRNA uridine 5-carboxymethylaminomethyl modification enzyme MnmG (624 aa).

FAD is bound by residues 13–18 (GGGHAG), valine 125, and serine 180. Residue 273–287 (GPRYCPSIEDKIVRF) coordinates NAD(+). Residue glutamine 370 coordinates FAD.

This sequence belongs to the MnmG family. As to quaternary structure, homodimer. Heterotetramer of two MnmE and two MnmG subunits. FAD is required as a cofactor.

It localises to the cytoplasm. In terms of biological role, NAD-binding protein involved in the addition of a carboxymethylaminomethyl (cmnm) group at the wobble position (U34) of certain tRNAs, forming tRNA-cmnm(5)s(2)U34. This chain is tRNA uridine 5-carboxymethylaminomethyl modification enzyme MnmG, found in Legionella pneumophila (strain Paris).